The chain runs to 480 residues: Nuclear receptor subfamily 6 group A member 1 (480 aa).

Residues 1–32 (MERDEPPPSGGGGGGGSAGFLEPPAALPPPPR) form a disordered region. Positions 57–132 (QRTCLICGDR…MGMNRKAIRE (76 aa)) form a DNA-binding region, nuclear receptor. Cys-60, Cys-63, Cys-77, Cys-80, Cys-96, Cys-102, Cys-112, and Cys-115 together coordinate Zn(2+). NR C4-type zinc fingers lie at residues 60-80 (CLIC…CEGC) and 96-120 (CSRD…LLKC). 2 disordered regions span residues 131-150 (REDG…QISE) and 162-199 (FEEE…LSSS). A compositionally biased stretch (basic and acidic residues) spans 165–177 (EANHWSNHGDSDH). The interval 172 to 253 (HGDSDHSSPG…RSLDPQSYSL (82 aa)) is sufficient for interaction with UIMC1. The segment covering 187–199 (SNQPSPGSTLSSS) has biased composition (low complexity). In terms of domain architecture, NR LBD spans 249 to 480 (QSYSLIHQLL…HSCKTSVGKE (232 aa)).

The protein belongs to the nuclear hormone receptor family. NR6 subfamily. In terms of assembly, homodimer. Interacts with UIMC1. Shows highest expression in the germ cells of the adult testis.

The protein resides in the nucleus. Functionally, orphan nuclear receptor that binds to a response element containing the sequence 5'-TCAAGGTCA-3'. Acts as a regulator of embryonic stem cell pluripotency by mediating repression of POU5F1/OCT4: binds to the DR0 element within the POU5F1/OCT4 promoter and inhibits POU5F1/OCT4 expression during embryonic stem cell differentiation. Involved in the regulation of gene expression in germ cell development during gametogenesis. In Homo sapiens (Human), this protein is Nuclear receptor subfamily 6 group A member 1 (NR6A1).